Here is a 696-residue protein sequence, read N- to C-terminus: DNA ligase (696 aa).

Residues 41–45 (DGQYD), 90–91 (SL), and glutamate 120 each bind NAD(+). Lysine 122 (N6-AMP-lysine intermediate) is an active-site residue. Residues arginine 143, glutamate 180, lysine 296, and lysine 320 each contribute to the NAD(+) site. 4 residues coordinate Zn(2+): cysteine 414, cysteine 417, cysteine 433, and cysteine 439. The region spanning 603–692 (STPRTLEGLT…PDAVARPAEE (90 aa)) is the BRCT domain.

This sequence belongs to the NAD-dependent DNA ligase family. LigA subfamily. Requires Mg(2+) as cofactor. Mn(2+) is required as a cofactor.

It carries out the reaction NAD(+) + (deoxyribonucleotide)n-3'-hydroxyl + 5'-phospho-(deoxyribonucleotide)m = (deoxyribonucleotide)n+m + AMP + beta-nicotinamide D-nucleotide.. Its function is as follows. DNA ligase that catalyzes the formation of phosphodiester linkages between 5'-phosphoryl and 3'-hydroxyl groups in double-stranded DNA using NAD as a coenzyme and as the energy source for the reaction. It is essential for DNA replication and repair of damaged DNA. This chain is DNA ligase, found in Kineococcus radiotolerans (strain ATCC BAA-149 / DSM 14245 / SRS30216).